Here is a 113-residue protein sequence, read N- to C-terminus: Ig heavy chain V-III region A4 (113 aa).

In terms of domain architecture, Ig-like spans 1–113; that stretch reads EVKLEESGGG…YWGQGTLVTV (113 aa). Cysteines 22 and 98 form a disulfide.

This chain is Ig heavy chain V-III region A4, found in Mus musculus (Mouse).